Consider the following 534-residue polypeptide: Cytochrome P450 monooxygenase btcB (534 aa).

Residue N20 is glycosylated (N-linked (GlcNAc...) asparagine). A helical membrane pass occupies residues 41–61 (ALAFLCGALLFGFVYSVFYNL). N-linked (GlcNAc...) asparagine glycosylation is found at N335, N413, and N431. C484 contacts heme.

Belongs to the cytochrome P450 family. The cofactor is heme.

The protein localises to the membrane. The protein operates within secondary metabolite biosynthesis; terpenoid biosynthesis. In terms of biological role, cytochrome P4590 monooxygenase part of the gene cluster that mediates the biosynthesis of betaestacins. The bifunctional terpene synthase btcA converts isopentenyl diphosphate (IPP) and dimethylallyl diphosphate (DMAPP) into the sesterterpene betaestacin I. The C-terminal prenyltransferase (PT) domain of btcA catalyzes formation of GFPP, whereas the N-terminal terpene cyclase (TC) domain catalyzes the cyclization of GFPP into betaestacin I. The cytochrome P450 monooxygenase btcB oxidizes the C25 methyl group of betaestacin I to yield the carboxylic acid betaestacin IV via the alcohol betaestacin III. The cytochrome P450 monooxygenase btcC further catalyzes the multistep oxidation of betaestacin IV to produce several compounds, including betaestacins Va, Vb, Vc and VI. The chain is Cytochrome P450 monooxygenase btcB from Colletotrichum orbiculare (strain 104-T / ATCC 96160 / CBS 514.97 / LARS 414 / MAFF 240422) (Cucumber anthracnose fungus).